We begin with the raw amino-acid sequence, 23 residues long: Brevinin-1Eb (23 aa).

C17 and C23 are oxidised to a cystine.

The protein belongs to the frog skin active peptide (FSAP) family. Brevinin subfamily. As to expression, expressed by the skin glands.

It localises to the secreted. Its function is as follows. Shows antibacterial activity against representative Gram-negative and Gram-positive bacterial species, and a very high hemolytic activity. This chain is Brevinin-1Eb, found in Pelophylax lessonae (Pool frog).